A 351-amino-acid chain; its full sequence is Ferredoxin--NADP reductase (351 aa).

Residues threonine 14, aspartate 33, glutamine 41, tyrosine 46, alanine 86, phenylalanine 121, aspartate 287, and threonine 328 each coordinate FAD.

Belongs to the ferredoxin--NADP reductase type 2 family. Homodimer. FAD is required as a cofactor.

It carries out the reaction 2 reduced [2Fe-2S]-[ferredoxin] + NADP(+) + H(+) = 2 oxidized [2Fe-2S]-[ferredoxin] + NADPH. In Flavobacterium psychrophilum (strain ATCC 49511 / DSM 21280 / CIP 103535 / JIP02/86), this protein is Ferredoxin--NADP reductase.